A 644-amino-acid polypeptide reads, in one-letter code: Threonine--tRNA ligase (644 aa).

One can recognise a TGS domain in the interval 8-70; sequence VKAMVITLRD…EEDGELEILT (63 aa). Residues 251 to 541 are catalytic; sequence DHRKLGKELD…LTEHFAGAFP (291 aa). Cys342, His393, and His518 together coordinate Zn(2+).

The protein belongs to the class-II aminoacyl-tRNA synthetase family. In terms of assembly, homodimer. Zn(2+) serves as cofactor.

It is found in the cytoplasm. It carries out the reaction tRNA(Thr) + L-threonine + ATP = L-threonyl-tRNA(Thr) + AMP + diphosphate + H(+). Its function is as follows. Catalyzes the attachment of threonine to tRNA(Thr) in a two-step reaction: L-threonine is first activated by ATP to form Thr-AMP and then transferred to the acceptor end of tRNA(Thr). Also edits incorrectly charged L-seryl-tRNA(Thr). In Caldanaerobacter subterraneus subsp. tengcongensis (strain DSM 15242 / JCM 11007 / NBRC 100824 / MB4) (Thermoanaerobacter tengcongensis), this protein is Threonine--tRNA ligase.